We begin with the raw amino-acid sequence, 146 residues long: 3-hydroxyacyl-[acyl-carrier-protein] dehydratase FabZ (146 aa).

H48 is a catalytic residue.

It belongs to the thioester dehydratase family. FabZ subfamily.

It localises to the cytoplasm. It carries out the reaction a (3R)-hydroxyacyl-[ACP] = a (2E)-enoyl-[ACP] + H2O. Involved in unsaturated fatty acids biosynthesis. Catalyzes the dehydration of short chain beta-hydroxyacyl-ACPs and long chain saturated and unsaturated beta-hydroxyacyl-ACPs. The protein is 3-hydroxyacyl-[acyl-carrier-protein] dehydratase FabZ of Teredinibacter turnerae (strain ATCC 39867 / T7901).